Consider the following 283-residue polypeptide: Peroxisome biogenesis protein 22 (283 aa).

Alanine 2 is subject to N-acetylalanine. The helical transmembrane segment at 45 to 62 (IGAIAGLAIAVIFTWRAI) threads the bilayer. The segment at 66–107 (GEQRQRRQPKRRIHNAETSSAAAAASQSNLASSVAPEVSSPR) is disordered. Residues 81 to 100 (AETSSAAAAASQSNLASSVA) are compositionally biased toward low complexity.

It belongs to the peroxin-22 family. Interacts with PEX4.

The protein resides in the peroxisome membrane. Its function is as follows. May be tethered PEX4 to the peroxisome membrane and may be involved in a late step of the matrix protein import. Does not play a role in the biogenesis of the peroxisomal membrane. The polypeptide is Peroxisome biogenesis protein 22 (PEX22) (Arabidopsis thaliana (Mouse-ear cress)).